A 590-amino-acid polypeptide reads, in one-letter code: Transcription factor bHLH13 (590 aa).

Disordered stretches follow at residues 274–296 (LQHH…HRQF) and 385–439 (AASS…EAER). Low complexity predominate over residues 281–293 (QQQQQQPPQQQQH). The segment covering 416–425 (RPRKRGRRPA) has biased composition (basic residues). One can recognise a bHLH domain in the interval 429–478 (AEALNHVEAERQRREKLNQRFYALRSVVPNISKMDKASLLGDAVSYINEL).

As to quaternary structure, homodimer.

The protein resides in the nucleus. The sequence is that of Transcription factor bHLH13 (BHLH13) from Arabidopsis thaliana (Mouse-ear cress).